Reading from the N-terminus, the 440-residue chain is Enolase (440 aa).

Gln163 lines the (2R)-2-phosphoglycerate pocket. Catalysis depends on Glu205, which acts as the Proton donor. Mg(2+)-binding residues include Asp242, Glu288, and Asp315. 4 residues coordinate (2R)-2-phosphoglycerate: Lys340, Arg369, Ser370, and Lys391. The active-site Proton acceptor is Lys340.

It belongs to the enolase family. Requires Mg(2+) as cofactor.

It localises to the cytoplasm. Its subcellular location is the secreted. It is found in the cell surface. The catalysed reaction is (2R)-2-phosphoglycerate = phosphoenolpyruvate + H2O. Its pathway is carbohydrate degradation; glycolysis; pyruvate from D-glyceraldehyde 3-phosphate: step 4/5. In terms of biological role, catalyzes the reversible conversion of 2-phosphoglycerate (2-PG) into phosphoenolpyruvate (PEP). It is essential for the degradation of carbohydrates via glycolysis. This Pediococcus pentosaceus (strain ATCC 25745 / CCUG 21536 / LMG 10740 / 183-1w) protein is Enolase.